Here is a 923-residue protein sequence, read N- to C-terminus: Dynein axonemal intermediate chain 3 (923 aa).

Residues 1-35 (MAPKPPKSPKGQKKGKKNMKQQLLVPEEEEPMNME) are disordered. The span at 10–19 (KGQKKGKKNM) shows a compositional bias: basic residues. WD repeat units lie at residues 398–438 (ESPD…DRIE), 480–536 (GHRK…PAVT), 702–741 (VHDG…GPLL), and 745–785 (CGPK…HEPA). A coiled-coil region spans residues 869-889 (LELVKKKAKIYQKTKEQMEAE).

Interacts with ACTR2; this interaction reduces binding of the Arp2/3 complex to the VCA domain of nucleation promoting factors. Part of the multisubunit axonemal dynein complex formed at least of two heavy chains and a number of intermediate and light chains. Found in a associated with the catalytic heavy chain DNAH2, the intermediate chain DNAI4, and the light chain DYNLT1. As to expression, strongly expressed in the testes. Detected also in brain and lung tissues.

It is found in the cytoplasm. Acts as a negative regulator of cell migration, invasion, and metastasis downstream of p53/TP53, through inhibition of Arp2/3 complex-mediated actin polymerization. Via its association with the multisubunit axonemal dynein complex, is potentially involved in the regulation of cilia function. May play a role in osteogenesis of dental tissue-derived mesenchymal stem cells. In Mus musculus (Mouse), this protein is Dynein axonemal intermediate chain 3 (Dnai3).